The sequence spans 328 residues: uncharacterized protein (328 aa).

Residues 1–24 (MKSIKGLGKLLLASSILFSSSAFA) form the signal peptide.

The protein belongs to the bacterial solute-binding protein 7 family.

Its subcellular location is the periplasm. This is an uncharacterized protein from Haemophilus influenzae (strain ATCC 51907 / DSM 11121 / KW20 / Rd).